A 292-amino-acid chain; its full sequence is Probable xyloglucan endotransglucosylase/hydrolase protein 6 (292 aa).

Positions 1–30 are cleaved as a signal peptide; that stretch reads MAKIYSPSFPGTLCLCIFTLLTLMFIRVSA. Residues 31–224 enclose the GH16 domain; it reads RPATFVEDFK…WSKAPFYAYY (194 aa). E110 functions as the Nucleophile in the catalytic mechanism. E114 functions as the Proton donor in the catalytic mechanism. E114 serves as a coordination point for xyloglucan. N-linked (GlcNAc...) asparagine glycosylation occurs at N118. Xyloglucan-binding positions include 127–129, 137–139, 203–204, and G208; these read QTN, DRE, and DW. Disulfide bonds link C232/C240 and C277/C290. R282 contacts xyloglucan.

It belongs to the glycosyl hydrolase 16 family. XTH group 1 subfamily. Contains at least one intrachain disulfide bond essential for its enzymatic activity.

The protein resides in the secreted. The protein localises to the cell wall. It is found in the extracellular space. It localises to the apoplast. It catalyses the reaction breaks a beta-(1-&gt;4) bond in the backbone of a xyloglucan and transfers the xyloglucanyl segment on to O-4 of the non-reducing terminal glucose residue of an acceptor, which can be a xyloglucan or an oligosaccharide of xyloglucan.. Functionally, catalyzes xyloglucan endohydrolysis (XEH) and/or endotransglycosylation (XET). Cleaves and religates xyloglucan polymers, an essential constituent of the primary cell wall, and thereby participates in cell wall construction of growing tissues. The sequence is that of Probable xyloglucan endotransglucosylase/hydrolase protein 6 (XTH6) from Arabidopsis thaliana (Mouse-ear cress).